Consider the following 305-residue polypeptide: MAERNELHKRNRHNGQYDFSRLTEEYPPLKKFIVLNAYGTTSIDFFNPRAVKALNKALLISCYGIRYWDIPKNYLCPPIPGRADYIHYIADLIQPDISDESTGLKTAIPNARQYRCLDIGVGANCIYPIIGQTEYGWTFVGSDIDPVSIDNARKIVTCNPALAHKIELRLQRDSRKIFEGIIAPNEYFDVTLCNPPFHSSKEEAEDGTLRKLSSLKGKKVTKARLNFGGNANELWCEGGELRFLLTMIEESRNYRKNCGWFTSLVSKEKNLGKLTAKLKSTDIAEHRIIEMHQGTKTSRILAWRF.

Belongs to the methyltransferase superfamily. METTL16/RlmF family.

It localises to the cytoplasm. It carries out the reaction adenosine(1618) in 23S rRNA + S-adenosyl-L-methionine = N(6)-methyladenosine(1618) in 23S rRNA + S-adenosyl-L-homocysteine + H(+). In terms of biological role, specifically methylates the adenine in position 1618 of 23S rRNA. The polypeptide is Ribosomal RNA large subunit methyltransferase F (Bacteroides fragilis (strain YCH46)).